We begin with the raw amino-acid sequence, 263 residues long: SPRY domain-containing SOCS box protein 2 (263 aa).

Positions Met-1 to Pro-16 are enriched in polar residues. The disordered stretch occupies residues Met-1–Trp-48. Residues Pro-26–Arg-221 form the B30.2/SPRY domain. The region spanning Ala-222 to Gln-263 is the SOCS box domain.

It belongs to the SPSB family. In terms of assembly, component of the probable ECS(SPSB2) E3 ubiquitin-protein ligase complex which contains CUL5, RNF7/RBX2, Elongin BC complex and SPSB2. Interacts with CUL5, RNF7, ELOB and ELOC. Interacts with MET. Interacts (via B30.2/SPRY domain) with PAWR; this interaction occurs in association with the Elongin BC complex. Interacts with NOS2. (Microbial infection) Interacts (via C-terminus) with HCV envelope glycoprotein E1. Interacts (via C-terminus) with HCV non-structural protein 5A; this interaction targets NS5A for ubiquitination and degradation.

The protein localises to the cytoplasm. It is found in the cytosol. It functions in the pathway protein modification; protein ubiquitination. Functionally, substrate recognition component of a SCF-like ECS (Elongin BC-CUL2/5-SOCS-box protein) E3 ubiquitin-protein ligase complex which mediates the ubiquitination and subsequent proteasomal degradation of target proteins. Negatively regulates nitric oxide (NO) production and limits cellular toxicity in activated macrophages by mediating the ubiquitination and proteasomal degradation of NOS2. Acts as a bridge which links NOS2 with the ECS E3 ubiquitin ligase complex components ELOC and CUL5. The protein is SPRY domain-containing SOCS box protein 2 (SPSB2) of Homo sapiens (Human).